A 618-amino-acid polypeptide reads, in one-letter code: MSFRQISSSFRSSSGSSCGGGGGRGASRGSMRSSFGRSSRAGGESRFGSSSGFGGGGFSACGTGGGGSFGSSYGGGYGRGFSAGSSSGMFGGSSRGCFGGGSGGGFGGGSGGGFGGGFGGGFGGGSGGGEGSILNTNEKVVMQNLNSRLASYMDKVQELEEDNANLEKQIQEWYSRKGNRVFQKDYSHYYNTIEDLKDRIVDLTARNNKALIDMDNTRMTLGDFRVKLEMEQSLPQGVDADINGLQKVLDDINMEKSDLEIQFDSLDDELKALKKSHKEEMNQLTGLNDGDVNVEINVAPSTDLTQVLNDMREEYEHLISKNRQDIEQHYESQMTQIEHQLTNSGPEMETNMKQVSQLQHSVQELNIELQTQLTTKSALEKALEDTKNRYCGQLQQIREQISEMEAQLAQVRAETECQNQEYGLLLSIKTRLEKEIETYRKLLEGGQQDFESSGAGQIGFGSGKGGQRGSGGSYGGGSGDSYEGESGGSYGGGSGGSHGGKSGGSYGGGSSSGGGSGGSYGGGSGGSHGGKSGGSHGGGSGGSYGGGSGSGGESGGSYGGGSGGSHGGQKGGSGGSYEGGSGGSYGGGSGSGGGSGGSYGGGNTRPSQSQSSQIPRLR.

Positions 1 to 49 (MSFRQISSSFRSSSGSSCGGGGGRGASRGSMRSSFGRSSRAGGESRFGS) are disordered. The head stretch occupies residues 1 to 137 (MSFRQISSSF…GGEGSILNTN (137 aa)). Over residues 7–16 (SSSFRSSSGS) the composition is skewed to low complexity. Phosphoserine occurs at positions 14 and 17. Positions 17–26 (SCGGGGGRGA) are enriched in gly residues. Residues 27 to 49 (SRGSMRSSFGRSSRAGGESRFGS) are compositionally biased toward low complexity. The coil 1A stretch occupies residues 138 to 173 (EKVVMQNLNSRLASYMDKVQELEEDNANLEKQIQEW). Residues 138–450 (EKVVMQNLNS…KLLEGGQQDF (313 aa)) enclose the IF rod domain. Residues 174-192 (YSRKGNRVFQKDYSHYYNT) are linker 1. The coil 1B stretch occupies residues 193-284 (IEDLKDRIVD…KSHKEEMNQL (92 aa)). Residues 285–307 (TGLNDGDVNVEINVAPSTDLTQV) form a linker 12 region. The interval 308-446 (LNDMREEYEH…ETYRKLLEGG (139 aa)) is coil 2. The segment at 447 to 609 (QQDFESSGAG…GGGNTRPSQS (163 aa)) is tail. Positions 449–618 (DFESSGAGQI…SQSSQIPRLR (170 aa)) are disordered. Positions 456–603 (GQIGFGSGKG…GSGGSYGGGN (148 aa)) are enriched in gly residues. Residues 607 to 618 (SQSQSSQIPRLR) show a composition bias toward low complexity.

This sequence belongs to the intermediate filament family. Heterotetramer of two type I and two type II keratins. In terms of tissue distribution, expressed in the perinuclear ring of spermatid manchettes within testis and in keratinocytes of the suprabasal layer of footpad epidermis (at protein level).

In terms of biological role, may serve an important special function either in the mature palmar and plantar skin tissue or in the morphogenetic program of the formation of these tissues. Plays a role in keratin filament assembly. May be involved in spermatid nuclear shaping and sperm development. This Rattus norvegicus (Rat) protein is Keratin, type I cytoskeletal 9 (Krt9).